A 120-amino-acid polypeptide reads, in one-letter code: BLOC-1-related complex subunit 8 (120 aa).

The tract at residues 101–120 (MNTSAQGHSQEKLSPPPSLA) is disordered. Ser109 bears the Phosphoserine mark.

The protein belongs to the BORCS8 family. As to quaternary structure, component of the BLOC-one-related complex (BORC) which is composed of BLOC1S1, BLOC1S2, BORCS5, BORCS6, BORCS7, BORCS8, KXD1 and SNAPIN.

The protein localises to the lysosome membrane. Functionally, as part of the BLOC-one-related complex (BORC), it plays a role in the movement and localization of lysosomes at the cell periphery. Associated with the cytosolic face of lysosomes, BORC recruits ARL8B to the lysosomal membrane and couples lysosomes to microtubule plus-end-directed kinesin motors, driving lysosome movement toward the cell periphery. The polypeptide is BLOC-1-related complex subunit 8 (Mus musculus (Mouse)).